We begin with the raw amino-acid sequence, 307 residues long: Small ribosomal subunit biogenesis GTPase RsgA (307 aa).

A CP-type G domain is found at 82 to 240; it reads GRYGERIVVA…IADTPGLREV (159 aa). GTP-binding positions include 131–134 and 182–190; these read NKAD and GPSGVGKSS. Cys-264, Cys-269, His-271, and Cys-277 together coordinate Zn(2+).

This sequence belongs to the TRAFAC class YlqF/YawG GTPase family. RsgA subfamily. In terms of assembly, monomer. Associates with 30S ribosomal subunit, binds 16S rRNA. The cofactor is Zn(2+).

The protein resides in the cytoplasm. One of several proteins that assist in the late maturation steps of the functional core of the 30S ribosomal subunit. Helps release RbfA from mature subunits. May play a role in the assembly of ribosomal proteins into the subunit. Circularly permuted GTPase that catalyzes slow GTP hydrolysis, GTPase activity is stimulated by the 30S ribosomal subunit. The polypeptide is Small ribosomal subunit biogenesis GTPase RsgA (Gemmatimonas aurantiaca (strain DSM 14586 / JCM 11422 / NBRC 100505 / T-27)).